The following is a 310-amino-acid chain: Malate dehydrogenase (310 aa).

Residues 7–13 (GAAGGIG) and Asp34 contribute to the NAD(+) site. Substrate is bound by residues Arg81 and Arg87. Residues Asn94 and 117-119 (ITN) contribute to the NAD(+) site. Substrate-binding residues include Asn119 and Arg153. His177 acts as the Proton acceptor in catalysis. Residue Met227 coordinates NAD(+).

The protein belongs to the LDH/MDH superfamily. MDH type 1 family. As to quaternary structure, homodimer.

The catalysed reaction is (S)-malate + NAD(+) = oxaloacetate + NADH + H(+). Its function is as follows. Catalyzes the reversible oxidation of malate to oxaloacetate. The sequence is that of Malate dehydrogenase from Pseudoalteromonas translucida (strain TAC 125).